The chain runs to 452 residues: Asparagine--tRNA ligase (452 aa).

It belongs to the class-II aminoacyl-tRNA synthetase family. In terms of assembly, homodimer.

It localises to the cytoplasm. The catalysed reaction is tRNA(Asn) + L-asparagine + ATP = L-asparaginyl-tRNA(Asn) + AMP + diphosphate + H(+). The protein is Asparagine--tRNA ligase of Mycoplasma mycoides subsp. mycoides SC (strain CCUG 32753 / NCTC 10114 / PG1).